Reading from the N-terminus, the 340-residue chain is MSELDQLRQEAEQLKSQIREARKSANDTTLATVASNLEPIGRIQMRTRRTLRGHLAKIYAMHWASDSRNLVSASQDGKLIVWDSYTTNKVHAIPLRSSWVMTCAYAPSGSFVACGGLDNICSIYSLKTREGNVRVSRELPGHTGYLSCCRFLDDNQIVTSSGDMTCALWDIETGQQCTAFTGHTGDVMSLSLSPDFRTFISGACDASAKLWDIRDGMCKQTFPGHESDINAVAFFPSGNAFATGSDDATCRLFDIRADQELAMYSHDNIICGITSVAFSKSGRLLFAGYDDFNCNVWDSMRQERAGVLAGHDNRVSCLGVTEDGMAVCTGSWDSFLKIWN.

WD repeat units follow at residues 53-83 (GHLA…IVWD), 95-125 (LRSS…SIYS), 141-170 (GHTG…ALWD), 182-212 (GHTG…KLWD), 224-254 (GHES…RLFD), 268-298 (NIIC…NVWD), and 310-340 (GHDN…KIWN).

Belongs to the WD repeat G protein beta family. As to quaternary structure, g proteins are composed of 3 units, alpha, beta and gamma. Interacts with G protein gamma subunits gpc-1 and gpc-2 and with egl-10 and eat-16. Interacts with goa-1 (in GDP-bound form).

Functionally, guanine nucleotide-binding proteins (G proteins) are involved as a modulator or transducer in various transmembrane signaling systems. The beta and gamma chains are required for the GTPase activity, for replacement of GDP by GTP, and for G protein-effector interaction. In the early embryo, controls the magnitude of the forces acting on centrosomes but is not required for generating asymmetric forces. The polypeptide is Guanine nucleotide-binding protein subunit beta-1 (gpb-1) (Caenorhabditis briggsae).